Here is a 320-residue protein sequence, read N- to C-terminus: MPSLDNTADEKPAIDPILLKVLDAVPFRLSIDDGIEAVRQRLRDLPRQPVHPELRVVDLAIDGPAGPIGTRIYWPPTCPDQAEAPVVLYFHGGGFVMGDLDTHDGTCRQHAVGADAIVVSVDYRLAPEHPYPAAIEDAWAATRWVAEHGRQVGADLGRIAVAGDSAGGTIAAVIAQRARDMGGPPIVFQLLWYPSTLWDQSLPSLAENADAPILDVKAIAAFSRWYAGEIDLHNPPAPMAPGRAENLADLPPAYIAVAGYDPLRDDGIRYGELLAAAGVPVEVHNAQTLVHGYVGYAGVVPAATEATNRGLVALRVVLHG.

Active-site residues include serine 165, aspartate 261, and histidine 291.

It belongs to the 'GDXG' lipolytic enzyme family.

The catalysed reaction is a fatty acid ester + H2O = an aliphatic alcohol + a fatty acid + H(+). It carries out the reaction a butanoate ester + H2O = an aliphatic alcohol + butanoate + H(+). It catalyses the reaction an octanoate ester + H2O = an aliphatic alcohol + octanoate + H(+). The enzyme catalyses decanoate ester + H2O = decanoate + an aliphatic alcohol + H(+). The catalysed reaction is an acetyl ester + H2O = an aliphatic alcohol + acetate + H(+). It carries out the reaction a dodecanoate ester + H2O = an aliphatic alcohol + dodecanoate + H(+). Inhibited by ionic detergents SDS (anions) and CTAB (cationic). Strongly inhibited by Zn(2+). Esterase that can hydrolyze short-chain esters with the carbon chain containing 2 to 12 carbon atoms. In vitro, pNP-butyrate is the preferred substrate. This chain is Esterase LipI, found in Mycobacterium tuberculosis (strain ATCC 25618 / H37Rv).